An 88-amino-acid chain; its full sequence is Small ribosomal subunit protein bS16c (88 aa).

This sequence belongs to the bacterial ribosomal protein bS16 family.

It localises to the plastid. The protein resides in the chloroplast. The chain is Small ribosomal subunit protein bS16c from Oenothera elata subsp. hookeri (Hooker's evening primrose).